The sequence spans 666 residues: Galactocerebrosidase (666 aa).

Residues 1 to 22 (MIYKLYFAIALCFSLCFDLCIA) form the signal peptide. Thr-91 provides a ligand contact to substrate. Residue Asn-125 is glycosylated (N-linked (GlcNAc...) asparagine). Substrate contacts are provided by Trp-133 and Asn-179. Glu-180 functions as the Proton donor/acceptor in the catalytic mechanism. Glu-256 acts as the Nucleophile in catalysis. A disulfide bridge connects residues Cys-269 and Cys-376. Residue Asn-361 is glycosylated (N-linked (GlcNAc...) asparagine). Arg-378 lines the substrate pocket. Asn-385, Asn-390, Asn-500, and Asn-540 each carry an N-linked (GlcNAc...) asparagine glycan.

Belongs to the glycosyl hydrolase 59 family.

It is found in the lysosome. It catalyses the reaction a beta-D-galactosyl-(1&lt;-&gt;1')-N-acylsphing-4-enine + H2O = an N-acylsphing-4-enine + D-galactose. The enzyme catalyses beta-D-galactosyl-(1&lt;-&gt;1)-sphing-4-enine + H2O = sphing-4-enine + D-galactose. It carries out the reaction a D-galactosylceramide + H2O = an N-acyl-sphingoid base + D-galactose. Its function is as follows. Hydrolyzes the galactose ester bonds of glycolipids such as galactosylceramide and galactosylsphingosine. The chain is Galactocerebrosidase from Salmo salar (Atlantic salmon).